Consider the following 307-residue polypeptide: N-acetylmuramic acid 6-phosphate etherase 2 (307 aa).

An SIS domain is found at 62–225 (ITAAFKQGGR…TTASMIRLGK (164 aa)). Glu90 (proton donor) is an active-site residue. Glu121 is a catalytic residue.

Belongs to the GCKR-like family. MurNAc-6-P etherase subfamily. Homodimer.

The enzyme catalyses N-acetyl-D-muramate 6-phosphate + H2O = N-acetyl-D-glucosamine 6-phosphate + (R)-lactate. It functions in the pathway amino-sugar metabolism; 1,6-anhydro-N-acetylmuramate degradation. It participates in amino-sugar metabolism; N-acetylmuramate degradation. The protein operates within cell wall biogenesis; peptidoglycan recycling. In terms of biological role, specifically catalyzes the cleavage of the D-lactyl ether substituent of MurNAc 6-phosphate, producing GlcNAc 6-phosphate and D-lactate. Together with AnmK, is also required for the utilization of anhydro-N-acetylmuramic acid (anhMurNAc) either imported from the medium or derived from its own cell wall murein, and thus plays a role in cell wall recycling. The protein is N-acetylmuramic acid 6-phosphate etherase 2 of Vibrio cholerae serotype O1 (strain ATCC 39315 / El Tor Inaba N16961).